A 182-amino-acid chain; its full sequence is Endoribonuclease YbeY (182 aa).

Residues His120, His124, and His130 each contribute to the Zn(2+) site. Residues 157–182 are disordered; that stretch reads RGVSFAPKPTGAGAFPSAADRDDTQN.

This sequence belongs to the endoribonuclease YbeY family. Zn(2+) is required as a cofactor.

It is found in the cytoplasm. Single strand-specific metallo-endoribonuclease involved in late-stage 70S ribosome quality control and in maturation of the 3' terminus of the 16S rRNA. The protein is Endoribonuclease YbeY of Corynebacterium jeikeium (strain K411).